Consider the following 106-residue polypeptide: UPF0145 protein NE1032 (106 aa).

This sequence belongs to the UPF0145 family.

The protein is UPF0145 protein NE1032 of Nitrosomonas europaea (strain ATCC 19718 / CIP 103999 / KCTC 2705 / NBRC 14298).